A 365-amino-acid polypeptide reads, in one-letter code: tRNA N6-adenosine threonylcarbamoyltransferase (365 aa).

Histidine 119 and histidine 123 together coordinate Fe cation. Residues 141 to 145 (LVSGG), aspartate 174, glycine 187, and asparagine 288 each bind substrate. A Fe cation-binding site is contributed by aspartate 316.

This sequence belongs to the KAE1 / TsaD family. It depends on Fe(2+) as a cofactor.

It is found in the cytoplasm. It catalyses the reaction L-threonylcarbamoyladenylate + adenosine(37) in tRNA = N(6)-L-threonylcarbamoyladenosine(37) in tRNA + AMP + H(+). Required for the formation of a threonylcarbamoyl group on adenosine at position 37 (t(6)A37) in tRNAs that read codons beginning with adenine. Is involved in the transfer of the threonylcarbamoyl moiety of threonylcarbamoyl-AMP (TC-AMP) to the N6 group of A37, together with TsaE and TsaB. TsaD likely plays a direct catalytic role in this reaction. The protein is tRNA N6-adenosine threonylcarbamoyltransferase of Rhizobium leguminosarum bv. trifolii (strain WSM2304).